The primary structure comprises 598 residues: Pescadillo homolog (598 aa).

A disordered region spans residues 296–317 (QAMKADSKDKDDNSNDEAPENV). In terms of domain architecture, BRCT spans 345–439 (PTATLFEDFV…ELLSANLYLP (95 aa)). Disordered regions lie at residues 452 to 501 (DALG…EDVE), 515 to 544 (GIAYSKAKDEGLHDDVASKKKRKVTDEDEE), and 564 to 598 (MKYSNQQKEDKIEELKKKKKQLAKKEKTLKKVEKK). Residues 463 to 485 (ESEDESSDSSEESDSEIENEEED) are compositionally biased toward acidic residues. Composition is skewed to basic and acidic residues over residues 520-532 (KAKDEGLHDDVAS), 570-579 (QKEDKIEELK), and 586-598 (AKKEKTLKKVEKK). Residues 557 to 598 (QRKLYKKMKYSNQQKEDKIEELKKKKKQLAKKEKTLKKVEKK) adopt a coiled-coil conformation.

It belongs to the pescadillo family. Component of the NOP7 complex, composed of ERB1, NOP7 and YTM1. The complex is held together by ERB1, which interacts with NOP7 via its N-terminal domain and with YTM1 via a high-affinity interaction between the seven-bladed beta-propeller domains of the 2 proteins. The NOP7 complex associates with the 66S pre-ribosome.

Its subcellular location is the nucleus. It localises to the nucleolus. The protein localises to the nucleoplasm. Component of the NOP7 complex, which is required for maturation of the 25S and 5.8S ribosomal RNAs and formation of the 60S ribosome. The protein is Pescadillo homolog of Candida glabrata (strain ATCC 2001 / BCRC 20586 / JCM 3761 / NBRC 0622 / NRRL Y-65 / CBS 138) (Yeast).